The following is a 1012-amino-acid chain: RAS protein activator like-3 (1012 aa).

Disordered regions lie at residues 1–128, 147–196, and 208–229; these read MDPP…TPDV, GNED…QIHN, and KKAK…ALGS. The span at 7-21 shows a compositional bias: polar residues; that stretch reads SRASQTQPVAPSPLT. Ser18 is subject to Phosphoserine. Over residues 27–39 the composition is skewed to gly residues; that stretch reads SGGGAEKGAGGFR. Residues 50–62 show a composition bias toward polar residues; sequence QSHQETTASSQPA. Ser51 is subject to Phosphoserine. Positions 100-113 are enriched in acidic residues; that stretch reads SEPEPENPEPEPEL. Phosphoserine is present on residues Ser160, Ser162, Ser163, and Ser166. Positions 160–171 are enriched in low complexity; it reads SASSESSIHVAS. The span at 175-186 shows a compositional bias: basic and acidic residues; it reads KDPDRTPGKTDP. A PH domain is found at 193–294; the sequence is QIHNVRGLLK…WIEDLRRHFQ (102 aa). 4 positions are modified to phosphoserine: Ser212, Ser225, Ser229, and Ser232. Thr235 carries the post-translational modification Phosphothreonine. The region spanning 285-405 is the C2 domain; that stretch reads WIEDLRRHFQ…APAAGLERWF (121 aa). In terms of domain architecture, Ras-GAP spans 475-683; the sequence is GRAQALVTDL…PAMQHFLDQV (209 aa). A disordered region spans residues 752–887; that stretch reads PAPRTQGHSS…DKDQALGTHR (136 aa). A phosphoserine mark is found at Ser788 and Ser791. Basic residues predominate over residues 826-841; sequence PARRRPSAGPRPRPKG. The stretch at 889-989 forms a coiled coil; sequence VGKLAELQCE…KDTIQNLQLL (101 aa). Polar residues predominate over residues 990–999; that stretch reads PRTSESQSQP. A disordered region spans residues 990–1012; the sequence is PRTSESQSQPVPLKAPCINGDTT.

The protein localises to the cytoplasm. Its subcellular location is the cell cortex. Functionally, functions as a Ras GTPase-activating protein. Plays an important role in the expansion and functions of natural killer T (NKT) cells in the liver by negatively regulating RAS activity and the down-stream ERK signaling pathway. In Bos taurus (Bovine), this protein is RAS protein activator like-3 (RASAL3).